We begin with the raw amino-acid sequence, 498 residues long: ATP synthase subunit beta, chloroplastic (498 aa).

Residue Gly-172–Thr-179 coordinates ATP.

Belongs to the ATPase alpha/beta chains family. F-type ATPases have 2 components, CF(1) - the catalytic core - and CF(0) - the membrane proton channel. CF(1) has five subunits: alpha(3), beta(3), gamma(1), delta(1), epsilon(1). CF(0) has four main subunits: a(1), b(1), b'(1) and c(9-12).

Its subcellular location is the plastid. The protein resides in the chloroplast thylakoid membrane. It catalyses the reaction ATP + H2O + 4 H(+)(in) = ADP + phosphate + 5 H(+)(out). Produces ATP from ADP in the presence of a proton gradient across the membrane. The catalytic sites are hosted primarily by the beta subunits. The polypeptide is ATP synthase subunit beta, chloroplastic (Trochodendron aralioides (Wheel tree)).